Reading from the N-terminus, the 495-residue chain is uncharacterized protein (495 aa).

Residues 305 to 317 (DYNNNNNENYSGS) show a composition bias toward low complexity. Residues 305-404 (DYNNNNNENY…LDEEDNRKNK (100 aa)) are disordered. Acidic residues predominate over residues 335–347 (YDNDENNDDENND). Positions 348–363 (ENNNNNNNNNNNNNNN) are enriched in low complexity. Residues 386–398 (SDDDEADNELDEE) are compositionally biased toward acidic residues.

This is an uncharacterized protein from Dictyostelium discoideum (Social amoeba).